The sequence spans 126 residues: Hydrogenase maturation factor HypA (126 aa).

Ni(2+) is bound at residue His2. Zn(2+) contacts are provided by Cys78, Cys81, Cys97, and Cys100.

The protein belongs to the HypA/HybF family.

In terms of biological role, involved in the maturation of [NiFe] hydrogenases. Required for nickel insertion into the metal center of the hydrogenase. The sequence is that of Hydrogenase maturation factor HypA from Methanococcus maripaludis (strain DSM 14266 / JCM 13030 / NBRC 101832 / S2 / LL).